The chain runs to 135 residues: uncharacterized protein (135 aa).

4 consecutive transmembrane segments (helical) span residues 7–25, 29–51, 64–85, and 89–108; these read WSAA…EWTI, ILLT…TGNI, VFIF…EVGI, and ALIF…ISIF.

The protein belongs to the bacteriophage holin family. Cp-1 holin subfamily.

The protein resides in the cell membrane. This is an uncharacterized protein from Halalkalibacterium halodurans (strain ATCC BAA-125 / DSM 18197 / FERM 7344 / JCM 9153 / C-125) (Bacillus halodurans).